The following is a 544-amino-acid chain: Chaperonin GroEL 2 (544 aa).

ATP-binding positions include 29–32 (TLGP), 86–90 (DGTTT), Gly-413, 479–481 (NAA), and Asp-495.

Belongs to the chaperonin (HSP60) family. As to quaternary structure, forms a cylinder of 14 subunits composed of two heptameric rings stacked back-to-back. Interacts with the co-chaperonin GroES.

Its subcellular location is the cytoplasm. It catalyses the reaction ATP + H2O + a folded polypeptide = ADP + phosphate + an unfolded polypeptide.. Its function is as follows. Together with its co-chaperonin GroES, plays an essential role in assisting protein folding. The GroEL-GroES system forms a nano-cage that allows encapsulation of the non-native substrate proteins and provides a physical environment optimized to promote and accelerate protein folding. The sequence is that of Chaperonin GroEL 2 from Prochlorococcus marinus (strain MIT 9313).